Reading from the N-terminus, the 344-residue chain is Phenylalanine--tRNA ligase alpha subunit (344 aa).

E256 serves as a coordination point for Mg(2+).

It belongs to the class-II aminoacyl-tRNA synthetase family. Phe-tRNA synthetase alpha subunit type 1 subfamily. In terms of assembly, tetramer of two alpha and two beta subunits. Mg(2+) is required as a cofactor.

The protein resides in the cytoplasm. It catalyses the reaction tRNA(Phe) + L-phenylalanine + ATP = L-phenylalanyl-tRNA(Phe) + AMP + diphosphate + H(+). This chain is Phenylalanine--tRNA ligase alpha subunit, found in Oceanobacillus iheyensis (strain DSM 14371 / CIP 107618 / JCM 11309 / KCTC 3954 / HTE831).